The sequence spans 620 residues: Glutathione-regulated potassium-efflux system protein KefC (620 aa).

The Periplasmic portion of the chain corresponds to M1–S3. Residues H4–V24 traverse the membrane as a helical segment. Residue R25 is a topological domain, cytoplasmic. Residues L26 to L46 traverse the membrane as a helical segment. Topologically, residues R47 to E53 are periplasmic. The helical transmembrane segment at S54–L74 threads the bilayer. The Cytoplasmic segment spans residues D75–G89. A helical membrane pass occupies residues G90–L110. Residues R111–Q113 are Periplasmic-facing. The chain crosses the membrane as a helical span at residues V114–M134. Residues N135 to A148 lie on the Cytoplasmic side of the membrane. A helical membrane pass occupies residues F149–L169. Over A170–T177 the chain is Periplasmic. Residues M178 to L198 form a helical membrane-spanning segment. The Cytoplasmic portion of the chain corresponds to G199–S213. A helical membrane pass occupies residues G214 to L233. Over L234–E236 the chain is Periplasmic. The chain crosses the membrane as a helical span at residues V237–S254. Residues S255 to K269 are Cytoplasmic-facing. A helical membrane pass occupies residues G270 to I290. Residues E291–P293 are Periplasmic-facing. Residues L294–I314 traverse the membrane as a helical segment. Over A315 to R326 the chain is Cytoplasmic. The chain crosses the membrane as a helical span at residues W327–Q347. The Periplasmic portion of the chain corresponds to M348–K358. A helical membrane pass occupies residues S359–N379. The Cytoplasmic portion of the chain corresponds to R380–S620. The region spanning Q399–T518 is the RCK N-terminal domain. Residues G597–S620 form a disordered region.

Belongs to the monovalent cation:proton antiporter 2 (CPA2) transporter (TC 2.A.37) family. KefC subfamily. In terms of assembly, homodimer. Interacts with the regulatory subunit KefF.

Its subcellular location is the cell inner membrane. In terms of biological role, pore-forming subunit of a potassium efflux system that confers protection against electrophiles. Catalyzes K(+)/H(+) antiport. The chain is Glutathione-regulated potassium-efflux system protein KefC from Shigella flexneri.